Reading from the N-terminus, the 235-residue chain is Lipoprotein-releasing system ATP-binding protein LolD (235 aa).

Residues 13-235 (LCCSNIIKRY…SNGMLKISTI (223 aa)) form the ABC transporter domain. An ATP-binding site is contributed by 49 to 56 (GASGSGKS).

The protein belongs to the ABC transporter superfamily. Lipoprotein translocase (TC 3.A.1.125) family. As to quaternary structure, the complex is composed of two ATP-binding proteins (LolD) and two transmembrane proteins (LolC and LolE).

Its subcellular location is the cell inner membrane. Functionally, part of the ABC transporter complex LolCDE involved in the translocation of mature outer membrane-directed lipoproteins, from the inner membrane to the periplasmic chaperone, LolA. Responsible for the formation of the LolA-lipoprotein complex in an ATP-dependent manner. The chain is Lipoprotein-releasing system ATP-binding protein LolD from Blochmanniella floridana.